Here is a 201-residue protein sequence, read N- to C-terminus: Putative toxin HigB2 (201 aa).

The protein belongs to the mycobacterial HigB family.

Functionally, putative toxic component of a type II toxin-antitoxin (TA) system. Its cognate antitoxin would be HigA2. In Mycobacterium tuberculosis (strain ATCC 25618 / H37Rv), this protein is Putative toxin HigB2.